The chain runs to 855 residues: Serine/threonine-protein kinase HAL5 (855 aa).

2 disordered regions span residues Met-1–Gln-166 and Arg-214–Thr-261. Phosphoserine is present on residues Ser-17 and Ser-19. The span at Ile-31–Gly-45 shows a compositional bias: polar residues. Low complexity predominate over residues Ile-57–Val-74. Phosphoserine occurs at positions 68 and 72. Positions Leu-94–Phe-114 are enriched in polar residues. Positions Leu-125–Ala-139 are enriched in basic and acidic residues. Phosphoserine is present on Ser-160. A compositionally biased stretch (low complexity) spans Gly-248 to Gly-258. Phosphoserine is present on residues Ser-273, Ser-277, Ser-324, Ser-333, Ser-336, Ser-358, Ser-391, and Ser-395. Residues Asn-319–Asn-347 are disordered. 2 disordered regions span residues Ser-401–Asn-427 and Leu-457–Pro-497. The segment covering Thr-462–Asn-474 has biased composition (polar residues). The Protein kinase domain occupies Gly-503–Met-837. Residues Val-509–Val-517 and Lys-546 each bind ATP. Asp-688 serves as the catalytic Proton acceptor.

Belongs to the protein kinase superfamily. CAMK Ser/Thr protein kinase family. NPR/HAL subfamily. HAL5 sub-subfamily.

It carries out the reaction L-seryl-[protein] + ATP = O-phospho-L-seryl-[protein] + ADP + H(+). The enzyme catalyses L-threonyl-[protein] + ATP = O-phospho-L-threonyl-[protein] + ADP + H(+). Its function is as follows. Protein kinase involved in salt tolerance and pH sensitivity, probably by regulating plasma membrane potential and cation influx. Positively controls the TRK1-TRK2 potassium transport system in response to potassium starvation. Stabilizes TRK1 in the plasma membrane by preventing its vacuolar sorting and degradation. Also stabilizes other plasma membrane nutrient transporters like CAN1, FUR4 and HXT1. May itself be subject to regulation by ARL1. The protein is Serine/threonine-protein kinase HAL5 (HAL5) of Saccharomyces cerevisiae (strain YJM789) (Baker's yeast).